We begin with the raw amino-acid sequence, 389 residues long: PqqA peptide cyclase (389 aa).

One can recognise a Radical SAM core domain in the interval 19-235 (VGLPLWLLAE…NEYRVRLEAE (217 aa)). 3 residues coordinate [4Fe-4S] cluster: cysteine 33, cysteine 37, and cysteine 40.

It belongs to the radical SAM superfamily. PqqE family. As to quaternary structure, interacts with PqqD. The interaction is necessary for activity of PqqE. It depends on [4Fe-4S] cluster as a cofactor.

It carries out the reaction [PQQ precursor protein] + S-adenosyl-L-methionine = E-Y cross-linked-[PQQ precursor protein] + 5'-deoxyadenosine + L-methionine + H(+). Its pathway is cofactor biosynthesis; pyrroloquinoline quinone biosynthesis. In terms of biological role, catalyzes the cross-linking of a glutamate residue and a tyrosine residue in the PqqA protein as part of the biosynthesis of pyrroloquinoline quinone (PQQ). This chain is PqqA peptide cyclase, found in Pseudomonas savastanoi pv. phaseolicola (strain 1448A / Race 6) (Pseudomonas syringae pv. phaseolicola (strain 1448A / Race 6)).